Reading from the N-terminus, the 350-residue chain is Bifunctional nitrilase/nitrile hydratase NIT4B (350 aa).

The 273-residue stretch at 30 to 302 folds into the CN hydrolase domain; sequence VRATVVQAST…EALISADLDL (273 aa). The active-site Proton acceptor is glutamate 70. Lysine 157 is a catalytic residue. The Nucleophile role is filled by cysteine 191.

Belongs to the carbon-nitrogen hydrolase superfamily. Nitrilase family. As to expression, highly expressed in leaves and cotyledons, lower expression in stems and roots.

The catalysed reaction is L-asparagine = 3-cyano-L-alanine + H2O. It carries out the reaction 3-cyano-L-alanine + 2 H2O = L-aspartate + NH4(+). Its function is as follows. Involved in the cyanide detoxification pathway. Has nitrilase and nitrile-hydratase activity in the ratio 3.3:1, producing both asparagine and aspartic acid from beta-cyano-L-alanine (Ala(CN)). Can also use 3-phenylpropionitrile as substrate, but not indole-3-acetonitrile. This Lupinus angustifolius (Narrow-leaved blue lupine) protein is Bifunctional nitrilase/nitrile hydratase NIT4B (NIT4B).